We begin with the raw amino-acid sequence, 1195 residues long: MSHQEQQFQHYPHHQHHHHHHHHHIHQVQSETQLEQRSSDLEPNRSRNTDRIGSSMDFRNLCQRIDVDGLKAKLPQLKLPKSLPKLRGRKIFRSSKSGSNAAGGGTAGGSAKDGAGAAQQTHLQVAGQSQQFINRTPQRISTISSLMYEGEQEEIRANLGQSQPGTYRSAGSLDDDYYAPGSGDRASRPISPIKIPVVGALDDSSPSENGNVRTTFTQRLQRGYKSLSELRIKHIFAKQTTVRRDNIEVDRYVEQYERELKSEKLARERRDREIAENYDIKIKTLAGTRQNTFDDDDVEHEQFERGKISHETDESGMEATPPLPSRRKPGIAATRFAKVRKPPLEMEEEQQQAAAEESPQANPPPPPPPRPSSYKQLLINKLPHLPSLPNLPQFSRTKEETTKTAENADENNASRKLSIRQNIKRLRKSIKRPSKIKSKAAAPVPDSDEEEATPDGQKTKDAPTRSSTANLRARLSRFASTEQLQQRWRKSFKVAKEPEELETKAEGSATGGASGVLGGLLVGSQLEKTLAKLNEKVHQLKFFQRNANNQNATTSKQPKPNTVGHEPIEIDDDELEATYHRSDSLEAENGNGNENDDSGEDISAEEAFGQIQEEDNEEDHSQDQTKRGQSSVSGIATAHAARQMAKLAEIQAASKSGAAAWSSESLEEIADEDYPRVLIHQEHSDAYESTLIIAVASKGSSMSPVVRSSGLKSSPAAGPKTSPHPEIRISASGPQKSMSYSPGNPRGEPVTKRSPSPEFKTPAGGNKIVPKSETSAWLPNEQIIAGFKEQTSWPAPALYKPKSIDIFEASAGGSAAFADFDEALRNAPVLRISAGSSIDTSGEEADDSCSRVTRIRVQSPQIGNSRESLMAQEEEDKEAERDSEEEEEERDPSERPPSESPPPPPLPQRRPPTKRPATPPIYDAVPPPLPVSKPPPPPSVETIPSVASLPSPAPVTRSMAQRSASMSRPAKPLVKTSSLRLTYNEQVRPGDVGKVNKLISRFEGGRPRLCPRRMHSEEYERCAQPEDEEPEMEQILELQIIERRAVDSVTPTNRAVVIPQITVNNNNNNERQLEQSDQSDQSAHQEITDTRKTKSMELALDRQNSNCSRSEYGSPLSFPSSRRSSTPTNLNANSNSNPNPSTNPNQNPSQILQHQRRSRRSMTRDDDNFYSFDSDEENSYYSISPSGSSRYVVEI.

The segment covering 1-10 has biased composition (low complexity); the sequence is MSHQEQQFQH. Disordered regions lie at residues 1–55, 85–132, 291–471, 493–515, 544–567, 613–637, 702–771, 833–977, and 1060–1195; these read MSHQ…IGSS, KLRG…SQQF, NTFD…TANL, KVAK…GASG, QRNA…GHEP, EEDN…GIAT, MSPV…IVPK, SAGS…VKTS, and QITV…VVEI. A compositionally biased stretch (basic residues) spans 11–26; sequence YPHHQHHHHHHHHHIH. Over residues 37-50 the composition is skewed to basic and acidic residues; it reads RSSDLEPNRSRNTD. A compositionally biased stretch (low complexity) spans 109–118; the sequence is GSAKDGAGAA. A compositionally biased stretch (polar residues) spans 119-132; sequence QQTHLQVAGQSQQF. The segment covering 300–313 has biased composition (basic and acidic residues); it reads HEQFERGKISHETD. Residues 351 to 360 are compositionally biased toward low complexity; the sequence is QQAAAEESPQ. The span at 361 to 371 shows a compositional bias: pro residues; that stretch reads ANPPPPPPPRP. A phospho-regulated basic and hydrophobic (PRBH) motif region spans residues 400 to 450; the sequence is ETTKTAENADENNASRKLSIRQNIKRLRKSIKRPSKIKSKAAAPVPDSDEE. Residues 422 to 438 are compositionally biased toward basic residues; that stretch reads NIKRLRKSIKRPSKIKS. The span at 494 to 505 shows a compositional bias: basic and acidic residues; sequence VAKEPEELETKA. Polar residues predominate over residues 545–560; that stretch reads RNANNQNATTSKQPKP. 2 stretches are compositionally biased toward polar residues: residues 732-742 and 856-867; these read SGPQKSMSYSP and RVQSPQIGNSRE. Acidic residues predominate over residues 872–891; the sequence is QEEEDKEAERDSEEEEEERD. Composition is skewed to pro residues over residues 898 to 910 and 925 to 939; these read SESP…PQRR and VPPP…PPPS. Positions 940–968 are enriched in low complexity; that stretch reads VETIPSVASLPSPAPVTRSMAQRSASMSR. The segment covering 1075–1085 has biased composition (polar residues); the sequence is QSDQSDQSAHQ. The segment covering 1086–1095 has biased composition (basic and acidic residues); that stretch reads EITDTRKTKS. Residues 1102 to 1111 show a composition bias toward polar residues; it reads RQNSNCSRSE. 2 stretches are compositionally biased toward low complexity: residues 1114–1149 and 1179–1195; these read SPLS…QNPS and SYYS…VVEI.

Phosphorylated by aPKC which lowers lipid affinity and promotes dissociation from the cell cortex. In the photoreceptor cells, aPKC-mediated phosphorylation leads to its displacement from the stalk apical cortex and thus restricts its localization to the rhabdomeric apical cortex where it functions. Dephosphorylation appears to be light-dependent. Restricted to photoreceptor cells (at protein level). Not detected until approximately 48hrs after puparium formation (APF) and then maintained in the photoreceptor cells post-eclosion (at protein level).

It localises to the cytoplasm. It is found in the cell cortex. Its subcellular location is the cytosol. The protein localises to the cell projection. The protein resides in the rhabdomere. Its function is as follows. Required for the morphological differentiation and maintenance of the rhabdomeric photoreceptor apical domain. Acts as a downstream component of the gl and Pph13 transcriptional pathway which is required for photoreceptor cell development. Likely to function by regulating the trafficking or retention of rhabdomeric proteins including the phototransduction proteins ninaE and didum. The chain is Protein PIP82 from Drosophila melanogaster (Fruit fly).